Reading from the N-terminus, the 651-residue chain is ATP-binding cassette sub-family G member 5 (651 aa).

The disordered stretch occupies residues 1 to 32 (MGDLSSLTPGGSMGLQVNRGSQSSLEGAPATA). The Cytoplasmic segment spans residues 1–383 (MGDLSSLTPG…RVTRNLVRNK (383 aa)). Residues 52–293 (RPWWDITSCR…FNDCGYPCPE (242 aa)) enclose the ABC transporter domain. 86 to 93 (GSSGSGKT) is a binding site for ATP. A helical transmembrane segment spans residues 384 to 404 (LAVITRLLQNLIMGLFLLFFV). Residues 388-645 (TRLLQNLIMG…ILGIVVFKIR (258 aa)) form the ABC transmembrane type-2 domain. Residues 405-421 (LRVRSNVLKGAIQDRVG) are Extracellular-facing. Residues 422 to 442 (LLYQFVGATPYTGMLNAVNLF) form a helical membrane-spanning segment. Topologically, residues 443–467 (PVLRAVSDQESQDGLYQKWQMMLAY) are cytoplasmic. Residues 468 to 489 (ALHVLPFSVVATMIFSSVCYWT) form a helical membrane-spanning segment. The Extracellular segment spans residues 490–500 (LGLHPEVARFG). Residues 501 to 521 (YFSAALLAPHLIGEFLTLVLL) traverse the membrane as a helical segment. Over 522-528 (GIVQNPN) the chain is Cytoplasmic. A helical transmembrane segment spans residues 529–549 (IVNSVVALLSIAGVLVGSGFL). Residues 550–623 (RNIQEMPIPF…PGATSRFTMN (74 aa)) are Extracellular-facing. 2 N-linked (GlcNAc...) asparagine glycosylation sites follow: N584 and N591. A helical transmembrane segment spans residues 624 to 644 (FLILYSFIPALVILGIVVFKI). At 645–651 (RDHLISR) the chain is on the cytoplasmic side.

This sequence belongs to the ABC transporter superfamily. ABCG family. Eye pigment precursor importer (TC 3.A.1.204) subfamily. Heterodimer with ABCG8. Mg(2+) is required as a cofactor. N-glycosylated. In terms of tissue distribution, strongly expressed in the liver, lower levels in the small intestine and colon.

It is found in the cell membrane. Its subcellular location is the apical cell membrane. The catalysed reaction is cholesterol(in) + ATP + H2O = cholesterol(out) + ADP + phosphate + H(+). The enzyme catalyses sitosterol(in) + ATP + H2O = sitosterol(out) + ADP + phosphate + H(+). With respect to regulation, the ATPase activity of the heterodimer is stimulated by cholate. Taurocholate, glycocholate, taurochenodeoxycholate, glycochenodeoxycholate and taurodeoxycholate also stimulate ATPase activity, but to a lower degree. Glycodeoxycholate has no significant effect on ATPase activity. ATPase activity is inhibited by vanadate and by berillium fluoride. Functionally, ABCG5 and ABCG8 form an obligate heterodimer that mediates Mg(2+)- and ATP-dependent sterol transport across the cell membrane. Plays an essential role in the selective transport of dietary plant sterols and cholesterol in and out of the enterocytes and in the selective sterol excretion by the liver into bile. Required for normal sterol homeostasis. The heterodimer with ABCG8 has ATPase activity. The sequence is that of ATP-binding cassette sub-family G member 5 from Homo sapiens (Human).